The following is a 273-amino-acid chain: 4-hydroxy-tetrahydrodipicolinate reductase (273 aa).

An NAD(+)-binding site is contributed by 12-17; the sequence is GAMGRM. Position 39 (Lys-39) interacts with NADP(+). NAD(+) contacts are provided by residues 102–104 and 126–129; these read GTT and ASNF. His-159 serves as the catalytic Proton donor/acceptor. His-160 is a (S)-2,3,4,5-tetrahydrodipicolinate binding site. The Proton donor role is filled by Lys-163. A (S)-2,3,4,5-tetrahydrodipicolinate-binding site is contributed by 169–170; sequence GT.

This sequence belongs to the DapB family. As to quaternary structure, homotetramer.

The protein resides in the cytoplasm. It catalyses the reaction (S)-2,3,4,5-tetrahydrodipicolinate + NAD(+) + H2O = (2S,4S)-4-hydroxy-2,3,4,5-tetrahydrodipicolinate + NADH + H(+). The catalysed reaction is (S)-2,3,4,5-tetrahydrodipicolinate + NADP(+) + H2O = (2S,4S)-4-hydroxy-2,3,4,5-tetrahydrodipicolinate + NADPH + H(+). The protein operates within amino-acid biosynthesis; L-lysine biosynthesis via DAP pathway; (S)-tetrahydrodipicolinate from L-aspartate: step 4/4. Catalyzes the conversion of 4-hydroxy-tetrahydrodipicolinate (HTPA) to tetrahydrodipicolinate. This is 4-hydroxy-tetrahydrodipicolinate reductase from Buchnera aphidicola subsp. Schizaphis graminum (strain Sg).